We begin with the raw amino-acid sequence, 257 residues long: MADTWSIGAHAFTSRLLVGTGKYPDFPTMQRALAASGAEVVTVAVRRLDLSKKGEESLLAWIPKGMKLLPNTAACFTAEEAIRTARLGRELEMGDLVKLEVIGDRRTLFPDVEGLIQAAKVLVKEGFTVLPYTNDDPVTAKKLEDAGCAAVMPLGAPIGSGLGLRNPYNLRIIMETVQVPVLVDAGVGTASDAALAMELGAVAVLMNTAIAEAKDPVLMAEAMRAGVEGGRKAFLAGRIPMKLHAAASSPMSGLIGS.

The active-site Schiff-base intermediate with DXP is Lys98. Residues Gly159, 185–186 (AG), and 207–208 (NT) each bind 1-deoxy-D-xylulose 5-phosphate.

The protein belongs to the ThiG family. As to quaternary structure, homotetramer. Forms heterodimers with either ThiH or ThiS.

Its subcellular location is the cytoplasm. It catalyses the reaction [ThiS sulfur-carrier protein]-C-terminal-Gly-aminoethanethioate + 2-iminoacetate + 1-deoxy-D-xylulose 5-phosphate = [ThiS sulfur-carrier protein]-C-terminal Gly-Gly + 2-[(2R,5Z)-2-carboxy-4-methylthiazol-5(2H)-ylidene]ethyl phosphate + 2 H2O + H(+). It participates in cofactor biosynthesis; thiamine diphosphate biosynthesis. Its function is as follows. Catalyzes the rearrangement of 1-deoxy-D-xylulose 5-phosphate (DXP) to produce the thiazole phosphate moiety of thiamine. Sulfur is provided by the thiocarboxylate moiety of the carrier protein ThiS. In vitro, sulfur can be provided by H(2)S. The sequence is that of Thiazole synthase from Anaeromyxobacter dehalogenans (strain 2CP-1 / ATCC BAA-258).